The chain runs to 164 residues: Ferredoxin-type protein NapF (164 aa).

4Fe-4S ferredoxin-type domains are found at residues 28–57, 58–89, and 132–161; these read GDESHFLTHCTRCDACINACENNILQRGAG, GYPSVNFKNNECSFCYACAQACPESLFSPRHT, and YQPQLNSQLCNGCGACAASCPVSAITAEYL. Residues Cys37, Cys40, Cys43, Cys47, Cys69, Cys72, Cys75, Cys79, Cys141, Cys144, Cys147, and Cys151 each contribute to the [4Fe-4S] cluster site.

The protein belongs to the NapF family. As to quaternary structure, interacts with the cytoplasmic NapA precursor. [4Fe-4S] cluster is required as a cofactor.

It localises to the cytoplasm. Its function is as follows. Could be involved in the maturation of NapA, the catalytic subunit of the periplasmic nitrate reductase, before its export into the periplasm. The protein is Ferredoxin-type protein NapF of Escherichia coli O157:H7.